The sequence spans 143 residues: Photosystem I reaction center subunit IV B, chloroplastic (143 aa).

A chloroplast-targeting transit peptide spans 1 to 51 (MASSSMASAASGFMVATPNIATSNTAPRTSMLFFSSSKNNTTTNFPRLVVR). A compositionally biased stretch (low complexity) spans 56-75 (AAPPAATATAEGEAPPAKAA). Positions 56 to 86 (AAPPAATATAEGEAPPAKAAKPPPIGPKRGT) are disordered.

This sequence belongs to the PsaE family. 2 isoforms exists (ratio 1:1). With or without the N-terminal alanine.

It is found in the plastid. The protein localises to the chloroplast thylakoid membrane. Functionally, stabilizes the interaction between PsaC and the PSI core, assists the docking of the ferredoxin to PSI and interacts with ferredoxin-NADP oxidoreductase. The protein is Photosystem I reaction center subunit IV B, chloroplastic (PSAEB) of Nicotiana sylvestris (Wood tobacco).